The primary structure comprises 4652 residues: Low-density lipoprotein receptor-related protein 2 (4652 aa).

The signal sequence occupies residues 1 to 25; the sequence is MERWAAAAACTLLLAFAACLAPASG. Over 26-4422 the chain is Extracellular; sequence RECLGNEFRC…SKGISPGTTV (4397 aa). LDL-receptor class A domains follow at residues 27 to 63, 66 to 104, 108 to 144, 142 to 181, 183 to 219, 223 to 259, and 267 to 308; these read ECLGNEFRCSNGHCITESWRCDGTRDCLDGSDEIGCP, TCGSTQFHCENEDVCIPLYWVCDGEEDCSNGADEHQRCP, TCSSHHFTCTNGECIPVEYRCDHSTDCLDGTDEINCR, NCRYPVCQQQTCHNGACYNTSQRCDGEIDCRDASDELNCT, RCLRNEFQCGSGECIPRDYVCDHDPDCSDSSDEHSCS, PCKGNEFACSNGFCINQNWVCDGMADCLDNSDEDGCE, and ECYP…RVCD. Disulfide bonds link C28–C40, C35–C53, C47–C62, C67–C80, C74–C93, C87–C103, C109–C121, C116–C134, C128–C143, C143–C158, C153–C171, C165–C180, C184–C196, C191–C209, C203–C218, C224–C236, C231–C249, C243–C258, C268–C281, C275–C294, and C288–C307. N-linked (GlcNAc...) asparagine glycans are attached at residues N160 and N179. The N-linked (GlcNAc...) asparagine glycan is linked to N341. The region spanning 348-386 is the EGF-like 1; calcium-binding domain; that stretch reads DFNDCQIWGICDHFCEDRIGHHQCFCAEGYVLEHEQHCR. 3 disulfides stabilise this stretch: C352–C362, C358–C371, and C373–C385. N-linked (GlcNAc...) asparagine glycosylation occurs at N388. LDL-receptor class B repeat units lie at residues 436–478, 479–521, 522–568, 569–613, 753–795, 796–837, 838–881, and 882–925; these read SKVF…DWIN, NKLY…DPTV, GYLF…DLVA, KRVY…FEDN, NAIF…DWIS, RNLY…HPIA, GYIF…DWGS, and SRLY…FGEY. Residue N771 is glycosylated (N-linked (GlcNAc...) asparagine). N866 carries N-linked (GlcNAc...) asparagine glycosylation. N-linked (GlcNAc...) asparagine glycosylation occurs at N1015. One can recognise an LDL-receptor class A 8 domain in the interval 1025-1061; the sequence is QCGALSFPCNNGRCVPLHYRCDGVDDCHDNSDEVQCG. 3 disulfide bridges follow: C1026-C1038, C1033-C1051, and C1045-C1060. N1064 carries an N-linked (GlcNAc...) asparagine glycan. LDL-receptor class A domains are found at residues 1066 to 1104, 1110 to 1146, 1150 to 1186, 1188 to 1225, 1231 to 1269, 1272 to 1308, and 1313 to 1351; these read SCAPSAFACGHGGGECIPSYWRCDNHNDCVDGSDEQNCS, SCRADYFTCDNHMCIPKNWLCDTDNDCGDGSDEKRCD, TCSPTQFHCPNHRCIDLAFVCDGDKDCADGSDESACV, NCTDSQFKCVGSNKCISNTYRCDGVSDCSDHSDEIDCP, MCRQDEFQCREDGICIPDSWECDGHPDCLTGSDEHSGCP, TCPXSRFLCANGNCIFRDWLCDGDNDCRDMSDEKDCP, and LCPSWQWQCPGHSICVNLSSVCDGISDCPHGTDESPLCN. 9 cysteine pairs are disulfide-bonded: C1067–C1081, C1074–C1094, C1088–C1103, C1111–C1123, C1118–C1136, C1130–C1145, C1151–C1163, C1158–C1176, and C1170–C1185. N-linked (GlcNAc...) asparagine glycosylation is present at N1102. Residues W1128, D1131, D1133, D1135, D1141, and E1142 each contribute to the Ca(2+) site. N-linked (GlcNAc...) asparagine glycosylation is present at N1188. Intrachain disulfides connect C1189–C1202, C1196–C1215, C1209–C1224, C1232–C1245, C1239–C1258, C1252–C1268, C1273–C1285, C1280–C1298, C1292–C1307, C1314–C1327, C1321–C1340, and C1334–C1350. Positions 1207, 1210, 1212, 1214, 1220, and 1221 each coordinate Ca(2+). N1329 is a glycosylation site (N-linked (GlcNAc...) asparagine). 4 N-linked (GlcNAc...) asparagine glycosylation sites follow: N1385, N1452, N1498, and N1552. LDL-receptor class B repeat units follow at residues 1480–1522, 1523–1565, 1568–1611, 1612–1654, 1655–1696, 1789–1831, 1832–1881, 1882–1929, 1930–1971, and 1972–2012; these read GRIF…DWVG, RNLY…DPRV, RVIF…DYPT, RLLY…TIFE, DSIY…VHPA, QFLY…DWLS, RNLY…DPAK, GKLY…DIQE, QKLY…YGPY, and LYYA…YRRR. N-linked (GlcNAc...) asparagine glycosylation is found at N1677 and N1809. A glycan (N-linked (GlcNAc...) asparagine) is linked at N2053. LDL-receptor class B repeat units lie at residues 2105–2154, 2155–2199, 2200–2243, 2244–2287, 2429–2475, 2476–2516, 2517–2560, 2561–2602, and 2603–2644; these read GFVY…DWVA, GNLY…DPKN, RYLF…DHNS, GYIY…FGNS, NRIY…DWIG, RRIY…DPCQ, GYMY…DYKE, NLLY…YGQY, and IYWT…VVNN. Residues N2175 and N2222 are each glycosylated (N-linked (GlcNAc...) asparagine). A glycan (N-linked (GlcNAc...) asparagine) is linked at N2485. LDL-receptor class A domains lie at 2696-2734, 2737-2773, 2776-2815, 2818-2857, 2860-2897, 2902-2941, 2944-2986, 2989-3025, 3028-3066, and 3071-3107; these read RCNSTQFTCLSGYCILESLKCNDIDECGDSSDELETLCA, TCPPTSFTCANGRCIQRHFRCDHYNDCGDNSDESGCR, SCNITTEFSCNNGKCLPLQLVCDGIDHCNDNNTSDEKNCA, TCLPDYIKCANSNVCIPRLFLCDGDNDCGDMSDENPIYCV, TCKNNEFQCTSGSCIPELWHCDGERDCDDGSDEPATCV, TCSSDEFKCDNNRCIQMEWICDGDNDCGDMSDEDGRHHCE, NCSS…QNCT, NCSGTEFRCSNGLCIPNWFRCDRRNDCGDYSDERNCK, ACDENLFTCQNGICTYKSYICDGENDCGDNSDELEHLCH, and TCPPHQFRCNNGNCIEMVKVCNHQADCSDNSDEERCG. 18 disulfide bridges follow: C2697–C2709, C2704–C2722, C2716–C2733, C2738–C2750, C2745–C2763, C2757–C2772, C2777–C2790, C2785–C2803, C2797–C2814, C2819–C2832, C2826–C2845, C2839–C2856, C2861–C2873, C2868–C2886, C2880–C2896, C2903–C2915, C2910–C2928, and C2922–C2940. N-linked (GlcNAc...) asparagine glycosylation occurs at N2698. N-linked (GlcNAc...) asparagine glycosylation occurs at N2778. N-linked (GlcNAc...) asparagine glycans are attached at residues N2806 and N2807. An N-linked (GlcNAc...) asparagine glycan is attached at N2944. Intrachain disulfides connect C2945–C2962, C2952–C2975, and C2969–C2985. 2 N-linked (GlcNAc...) asparagine glycosylation sites follow: N2984 and N2989. Disulfide bonds link C2990-C3002, C2997-C3015, C3009-C3024, C3029-C3041, C3036-C3054, C3048-C3065, C3072-C3084, C3079-C3097, and C3091-C3106. N-linked (GlcNAc...) asparagine glycosylation occurs at N3122. The 41-residue stretch at 3149–3189 folds into the EGF-like 2; calcium-binding domain; it reads DIDECKETPSVCSQKCENLLGSYICKCAPGYTREPDGRSCR. Intrachain disulfides connect C3153–C3164, C3160–C3173, and C3175–C3188. N3208, N3254, N3312, and N3352 each carry an N-linked (GlcNAc...) asparagine glycan. LDL-receptor class B repeat units follow at residues 3236–3278, 3279–3321, 3330–3373, 3374–3417, and 3418–3458; these read ERLY…DWVT, RKLY…DKPR, GYVY…DYTN, DLLY…FEDT, and IYWT…YHPY. N-linked (GlcNAc...) asparagine glycans are attached at residues N3435 and N3444. 9 LDL-receptor class A domains span residues 3509–3547, 3550–3588, 3591–3629, 3632–3670, 3675–3713, 3716–3753, 3756–3792, 3795–3831, and 3839–3877; these read MCSSTQFLCANNEMCIPIWWKCDGQKDCLDGSDEPNTCP, FCRLGQFQCSDGNCTSSNFICNARQDCPDGSDEDAVLCE, RCESNQWQCANKRCIPESWQCDSLNDCGDNSDEDSSHCA, TCLPGYFKCANGHCIPQSWKCDVDNDCGDYSDEPLQECM, RCDNYTEFDCKTNYRCIPKWAVCNGFDDCRDNSDEQNCE, TCKPSGEFRCTNHHCIPLRWRCDGHNDCGDNSDEENCV, QCSESEFRCDDQTCIPSRWICDQNNDCGDNSDERDCE, TCHPGYFQCSSGHCIPDQMRCDGFADCLDASDEATCP, and YCPATLFECKNHVCVQPSWKCDGDNDCGDGSDEELHLCL. Intrachain disulfides connect C3510–C3523, C3517–C3536, C3530–C3546, C3551–C3563, C3558–C3576, C3570–C3587, C3592–C3604, C3599–C3617, C3611–C3628, C3633–C3645, C3640–C3658, C3652–C3669, C3676–C3690, C3684–C3703, C3697–C3712, C3717–C3730, C3725–C3743, C3737–C3752, C3757–C3769, C3764–C3782, C3776–C3791, C3796–C3808, C3803–C3821, C3815–C3830, C3840–C3852, C3847–C3865, and C3859–C3876. N3562 carries an N-linked (GlcNAc...) asparagine glycan. Residue N3678 is glycosylated (N-linked (GlcNAc...) asparagine). N3878 is a glycosylation site (N-linked (GlcNAc...) asparagine). LDL-receptor class A domains follow at residues 3880–3919 and 3925–3961; these read TCDLTNRFRCDNNRCIYRHELCNHEDDCGDGSDEKKENCL and PCTEGEFKCSNGHCISQHLVCDDVDDCGDHFDETGCN. 12 cysteine pairs are disulfide-bonded: C3881/C3894, C3889/C3907, C3901/C3918, C3926/C3938, C3933/C3951, C3945/C3960, C3968/C3977, C3973/C3987, C3989/C4003, C4009/C4019, C4015/C4028, and C4030/C4045. One can recognise an EGF-like 3 domain in the interval 3964–4004; it reads EERSCAENLCEHNCTQLIGGGFICSCRPGFKASSLNRNSCE. N-linked (GlcNAc...) asparagine glycosylation occurs at N3976. The EGF-like 4; calcium-binding domain occupies 4005–4046; that stretch reads DINECEQFGVCPQNCHNTKGSYECTCAEGFRSMSEHYGERCA. N4066 is a glycosylation site (N-linked (GlcNAc...) asparagine). 3 LDL-receptor class B repeats span residues 4152–4194, 4195–4238, and 4240–4281; these read RHIY…NPKQ, GLMY…DYVN, and DRIY…FESQ. The N-linked (GlcNAc...) asparagine glycan is linked to N4325. Positions 4375-4409 constitute an EGF-like 5 domain; the sequence is MPPPCRCMNEGNCYFDKNNLPKCKCPSGYMGEYCE. Disulfide bonds link C4379–C4387, C4381–C4397, and C4399–C4408. The helical transmembrane segment at 4423-4443 threads the bilayer; sequence AVLVTLILIIIIGGLVALGFF. Topologically, residues 4444 to 4652 are cytoplasmic; that stretch reads HYRKTGSILI…ANLVREDSEA (209 aa). The short motif at 4450 to 4459 is the SH3-binding element; the sequence is SILISMPRLP. Positions 4453-4458 match the PxLPxI/L motif 1; mediates interaction with ANKRA2 motif; it reads ISMPRL. The short motif at 4456–4461 is the PxLPxI/L motif 2; mediates interaction with ANKRA2 element; sequence PRLPSL. At S4460 the chain carries Phosphoserine. An Endocytosis signal motif is present at residues 4518-4523; sequence FENPMY. Polar residues predominate over residues 4536-4553; the sequence is TTTQVSESGNVYNKNYGS. A disordered region spans residues 4536 to 4652; sequence TTTQVSESGN…ANLVREDSEA (117 aa). The residue at position 4568 (S4568) is a Phosphoserine. An interaction with DAB2 region spans residues 4588 to 4601; the sequence is QNTNFENPIYAETE. The short motif at 4594-4597 is the NPXY motif element; that stretch reads NPIY. The SH2-binding motif lies at 4597 to 4600; it reads YAET. The SH3-binding signature appears at 4610–4621; that stretch reads VTPPPSPSPPAK. Position 4615 is a phosphoserine (S4615). A compositionally biased stretch (polar residues) spans 4626–4636; sequence KGTTPAYSATE. T4629 is subject to Phosphothreonine. S4650 carries the post-translational modification Phosphoserine.

This sequence belongs to the LDLR family. In terms of assembly, binds plasminogen, extracellular matrix components, plasminogen activator-plasminogen activator inhibitor type I complex, apolipoprotein E-enriched beta-VLDL, lipoprotein lipase, lactoferrin, CLU/clusterin and calcium. Forms a multimeric complex together with LRPAP1. Interacts (via PxLPxI/L motif) with ANKRA2 (via ankyrin repeats). Interacts with LRP2BP. Interacts (via NPXY motif) with DAB2; the interaction is not affected by tyrosine phosphorylation of the NPXY motif. Interacts with MB. Interacts with BMP4. Interacts with the Sonic hedgehog protein N-product which is the active product of SHH. Interacts with CST3 in a calcium-dependent manner. Interacts with the vitamin-D binding protein GC/DBP. Interacts with sex hormone-binding protein SHBG. Interacts with angiotensin-2. Also interacts with angiotensin 1-7. Interacts with APOM. Interacts with selenoprotein SEPP1. Interacts with LEP. Interacts with ALB. Interacts with the antiapoptotic protein BIRC5/survivin. Interacts with matrix metalloproteinase MMP2 in complex with metalloproteinase inhibitor TIMP1. In neurons, forms a trimeric complex with APP and APPB1/FE65. Interacts with LDLRAP1/ARH; mediates trafficking of LRP2 to the endocytic recycling compartment. Does not interact with beta-amyloid protein 40 alone but interacts with the complex composed of beta-amyloid protein 40 and CLU/APOJ. Interacts with MDK. In terms of processing, a fraction undergoes proteolytic cleavage of the extracellular domain at the cell membrane to generate a cytoplasmic tail fragment. This is internalized into the early endosome from where it trafficks in an LDLRAP1/ARH-dependent manner to the endocytic recycling compartment (ERC). In the ERC, it is further cleaved by gamma-secretase to release a fragment which translocates to the nucleus and mediates transcriptional repression. Post-translationally, N-glycosylation is required for ligand binding.

It localises to the apical cell membrane. The protein localises to the endosome lumen. The protein resides in the membrane. It is found in the clathrin-coated pit. Its subcellular location is the cell projection. It localises to the dendrite. The protein localises to the axon. In terms of biological role, multiligand endocytic receptor. Acts together with CUBN to mediate endocytosis of high-density lipoproteins. Mediates receptor-mediated uptake of polybasic drugs such as aprotinin, aminoglycosides and polymyxin B. In the kidney, mediates the tubular uptake and clearance of leptin. Also mediates transport of leptin across the blood-brain barrier through endocytosis at the choroid plexus epithelium. Endocytosis of leptin in neuronal cells is required for hypothalamic leptin signaling and leptin-mediated regulation of feeding and body weight. Mediates endocytosis and subsequent lysosomal degradation of CST3 in kidney proximal tubule cells. Mediates renal uptake of 25-hydroxyvitamin D3 in complex with the vitamin D3 transporter GC/DBP. Mediates renal uptake of metallothionein-bound heavy metals. Together with CUBN, mediates renal reabsorption of myoglobin. Mediates renal uptake and subsequent lysosomal degradation of APOM. Plays a role in kidney selenium homeostasis by mediating renal endocytosis of selenoprotein SEPP1. Mediates renal uptake of the antiapoptotic protein BIRC5/survivin which may be important for functional integrity of the kidney. Mediates renal uptake of matrix metalloproteinase MMP2 in complex with metalloproteinase inhibitor TIMP1. Mediates endocytosis of Sonic hedgehog protein N-product (ShhN), the active product of SHH. Also mediates ShhN transcytosis. In the embryonic neuroepithelium, mediates endocytic uptake and degradation of BMP4, is required for correct SHH localization in the ventral neural tube and plays a role in patterning of the ventral telencephalon. Required at the onset of neurulation to sequester SHH on the apical surface of neuroepithelial cells of the rostral diencephalon ventral midline and to control PTCH1-dependent uptake and intracellular trafficking of SHH. During neurulation, required in neuroepithelial cells for uptake of folate bound to the folate receptor FOLR1 which is necessary for neural tube closure. In the adult brain, negatively regulates BMP signaling in the subependymal zone which enables neurogenesis to proceed. In astrocytes, mediates endocytosis of ALB which is required for the synthesis of the neurotrophic factor oleic acid. Involved in neurite branching. During optic nerve development, required for SHH-mediated migration and proliferation of oligodendrocyte precursor cells. Mediates endocytic uptake and clearance of SHH in the retinal margin which protects retinal progenitor cells from mitogenic stimuli and keeps them quiescent. Plays a role in reproductive organ development by mediating uptake in reproductive tissues of androgen and estrogen bound to the sex hormone binding protein SHBG. Mediates endocytosis of angiotensin-2. Also mediates endocytosis of angiotensis 1-7. Binds to the complex composed of beta-amyloid protein 40 and CLU/APOJ and mediates its endocytosis and lysosomal degradation. Required for embryonic heart development. Required for normal hearing, possibly through interaction with estrogen in the inner ear. In Sus scrofa (Pig), this protein is Low-density lipoprotein receptor-related protein 2.